The following is a 357-amino-acid chain: 3-dehydroquinate synthase (357 aa).

NAD(+) is bound by residues 126–127, K139, and K148; that span reads TT. Zn(2+) is bound by residues E181, H244, and H261.

It belongs to the sugar phosphate cyclases superfamily. Dehydroquinate synthase family. Requires Co(2+) as cofactor. Zn(2+) serves as cofactor. It depends on NAD(+) as a cofactor.

It localises to the cytoplasm. The catalysed reaction is 7-phospho-2-dehydro-3-deoxy-D-arabino-heptonate = 3-dehydroquinate + phosphate. It participates in metabolic intermediate biosynthesis; chorismate biosynthesis; chorismate from D-erythrose 4-phosphate and phosphoenolpyruvate: step 2/7. Its function is as follows. Catalyzes the conversion of 3-deoxy-D-arabino-heptulosonate 7-phosphate (DAHP) to dehydroquinate (DHQ). The sequence is that of 3-dehydroquinate synthase from Solibacter usitatus (strain Ellin6076).